A 404-amino-acid chain; its full sequence is G2/mitotic-specific cyclin-B1 (404 aa).

Belongs to the cyclin family. Cyclin AB subfamily. Interacts with the CDK1 protein kinase to form a serine/threonine kinase holoenzyme complex also known as maturation promoting factor (MPF). The cyclin subunit imparts substrate specificity to the complex.

In terms of biological role, essential for the control of the cell cycle at the G2/M (mitosis) transition. This is G2/mitotic-specific cyclin-B1 (ccnb1) from Oryzias latipes (Japanese rice fish).